The primary structure comprises 361 residues: Chorismate synthase (361 aa).

The NADP(+) site is built by R48 and R54. FMN contacts are provided by residues 125–127 (RSS), 238–239 (NA), G278, 293–297 (KPTSS), and R319.

This sequence belongs to the chorismate synthase family. As to quaternary structure, homotetramer. The cofactor is FMNH2.

The catalysed reaction is 5-O-(1-carboxyvinyl)-3-phosphoshikimate = chorismate + phosphate. Its pathway is metabolic intermediate biosynthesis; chorismate biosynthesis; chorismate from D-erythrose 4-phosphate and phosphoenolpyruvate: step 7/7. Its function is as follows. Catalyzes the anti-1,4-elimination of the C-3 phosphate and the C-6 proR hydrogen from 5-enolpyruvylshikimate-3-phosphate (EPSP) to yield chorismate, which is the branch point compound that serves as the starting substrate for the three terminal pathways of aromatic amino acid biosynthesis. This reaction introduces a second double bond into the aromatic ring system. This chain is Chorismate synthase, found in Salmonella choleraesuis (strain SC-B67).